A 291-amino-acid chain; its full sequence is Prolyl 4-hydroxylase 5 (291 aa).

Topologically, residues 1–22 (MASKSKQHLRYQPRKSVSRSTQ) are cytoplasmic. A helical; Signal-anchor for type II membrane protein transmembrane segment spans residues 23–43 (AFTVLILLLVVILILLGLGIL). Topologically, residues 44 to 291 (SLPNANRNSS…KWFHVHEFKV (248 aa)) are extracellular. N51 is a glycosylation site (N-linked (GlcNAc...) asparagine). The 124-residue stretch at 163-286 (NGEGLQVLHY…KWSSTKWFHV (124 aa)) folds into the Fe2OG dioxygenase domain. Residues H181 and D183 each coordinate Fe cation. N222 carries an N-linked (GlcNAc...) asparagine glycan. H267 is a binding site for Fe cation. K277 is a 2-oxoglutarate binding site.

This sequence belongs to the P4HA family. The cofactor is Fe(2+). L-ascorbate is required as a cofactor. As to expression, expressed in epidermal root hair cells (trichoblasts).

It is found in the endoplasmic reticulum membrane. Its subcellular location is the golgi apparatus membrane. It carries out the reaction L-prolyl-[collagen] + 2-oxoglutarate + O2 = trans-4-hydroxy-L-prolyl-[collagen] + succinate + CO2. Its function is as follows. Catalyzes the post-translational formation of 4-hydroxyproline in -Xaa-Pro-Gly- sequences in proline-rich peptide sequences of plant glycoproteins and other proteins. Hydroxyprolines are important constituent of many plant cell wall glycoproteins such as extensins, hydroxyproline-rich glycoproteins, lectins and arabinogalactan proteins. Possesses high affinity for leucine-rich repeat and proline-rich extensins of root cell walls that are essential for root hair development. Hydroxyprolines define the subsequent O-glycosylation sites by arabinosyltransferases which elongate the O-arabinosides on extensins. This is Prolyl 4-hydroxylase 5 from Arabidopsis thaliana (Mouse-ear cress).